Consider the following 155-residue polypeptide: Regulatory protein RecX (155 aa).

This sequence belongs to the RecX family.

It localises to the cytoplasm. Its function is as follows. Modulates RecA activity. The polypeptide is Regulatory protein RecX (Pseudomonas syringae pv. tomato (strain ATCC BAA-871 / DC3000)).